We begin with the raw amino-acid sequence, 400 residues long: Acetate kinase (400 aa).

N9 lines the Mg(2+) pocket. ATP is bound at residue K16. Residue R90 coordinates substrate. Catalysis depends on D147, which acts as the Proton donor/acceptor. ATP is bound by residues 207–211 (HIGNG), 282–284 (DLR), and 330–334 (GIGEN). Mg(2+) is bound at residue E385.

Belongs to the acetokinase family. As to quaternary structure, homodimer. Requires Mg(2+) as cofactor. It depends on Mn(2+) as a cofactor.

It localises to the cytoplasm. The enzyme catalyses acetate + ATP = acetyl phosphate + ADP. Its pathway is metabolic intermediate biosynthesis; acetyl-CoA biosynthesis; acetyl-CoA from acetate: step 1/2. In terms of biological role, catalyzes the formation of acetyl phosphate from acetate and ATP. Can also catalyze the reverse reaction. The protein is Acetate kinase of Staphylococcus aureus (strain USA300).